The chain runs to 97 residues: Eotaxin (97 aa).

The signal sequence occupies residues 1 to 23 (MQLSTALLFLLLTATSFTSQVLA). 2 disulfide bridges follow: C32-C57 and C33-C73. O-linked (GalNAc...) threonine glycosylation occurs at T94.

This sequence belongs to the intercrine beta (chemokine CC) family.

The protein localises to the secreted. Its function is as follows. In response to the presence of allergens, this protein directly promotes the accumulation of eosinophils (a prominent feature of allergic inflammatory reactions), but not lymphocytes, macrophages or neutrophils. Binds to CCR3. The sequence is that of Eotaxin (Ccl11) from Rattus norvegicus (Rat).